A 202-amino-acid chain; its full sequence is LexA repressor (202 aa).

A DNA-binding region (H-T-H motif) is located at residues Arg-28–Lys-48. Active-site for autocatalytic cleavage activity residues include Ser-123 and Lys-160.

Belongs to the peptidase S24 family. As to quaternary structure, homodimer.

The enzyme catalyses Hydrolysis of Ala-|-Gly bond in repressor LexA.. In terms of biological role, represses a number of genes involved in the response to DNA damage (SOS response), including recA and lexA. In the presence of single-stranded DNA, RecA interacts with LexA causing an autocatalytic cleavage which disrupts the DNA-binding part of LexA, leading to derepression of the SOS regulon and eventually DNA repair. The chain is LexA repressor from Pseudomonas chlororaphis (Pseudomonas aureofaciens).